A 1045-amino-acid chain; its full sequence is Probable sucrose-phosphate synthase (1045 aa).

Composition is skewed to basic and acidic residues over residues 93–115 and 124–137; these read ENEE…REAT and EGEK…DSTR. 3 disordered regions span residues 93-141, 222-243, and 662-692; these read ENEE…PRLP, WSYG…DDDD, and IASS…SDSL. A compositionally biased stretch (low complexity) spans 664–674; it reads SSRQRQPQWQR.

The protein belongs to the glycosyltransferase 1 family. As to quaternary structure, homodimer or homotetramer. Predominantly active in tap root.

It carries out the reaction beta-D-fructose 6-phosphate + UDP-alpha-D-glucose = sucrose 6(F)-phosphate + UDP + H(+). It participates in glycan biosynthesis; sucrose biosynthesis; sucrose from D-fructose 6-phosphate and UDP-alpha-D-glucose: step 1/2. Its activity is regulated as follows. Activity is regulated by phosphorylation and moderated by concentration of metabolites and light. Plays a role in photosynthetic sucrose synthesis by catalyzing the rate-limiting step of sucrose biosynthesis from UDP-glucose and fructose- 6-phosphate. Involved in the regulation of carbon partitioning in the leaves of plants. May regulate the synthesis of sucrose and therefore play a major role as a limiting factor in the export of photoassimilates out of the leaf. Plays a role for sucrose availability that is essential for plant growth and fiber elongation. The polypeptide is Probable sucrose-phosphate synthase (SPS) (Beta vulgaris (Sugar beet)).